Reading from the N-terminus, the 336-residue chain is Cellodextrinase A (336 aa).

The active-site Proton donor is the Glu-141.

The protein belongs to the glycosyl hydrolase 5 (cellulase A) family.

The protein resides in the secreted. Its function is as follows. Crystalline cellulose degradation. This chain is Cellodextrinase A (celA), found in Ruminococcus flavefaciens.